The sequence spans 331 residues: GTP 3',8-cyclase (331 aa).

The 229-residue stretch at 6-234 (PFNRKIDYLR…PATGKSHDGP (229 aa)) folds into the Radical SAM core domain. Arg15 contributes to the GTP binding site. 2 residues coordinate [4Fe-4S] cluster: Cys22 and Cys26. Tyr28 serves as a coordination point for S-adenosyl-L-methionine. Cys29 contributes to the [4Fe-4S] cluster binding site. Arg66 provides a ligand contact to GTP. Gly70 contacts S-adenosyl-L-methionine. GTP is bound at residue Ser97. S-adenosyl-L-methionine is bound at residue Ser121. Lys158 contacts GTP. Met192 is an S-adenosyl-L-methionine binding site. [4Fe-4S] cluster is bound by residues Cys258 and Cys261. 263-265 (RVR) contacts GTP. Cys275 lines the [4Fe-4S] cluster pocket.

The protein belongs to the radical SAM superfamily. MoaA family. In terms of assembly, monomer and homodimer. It depends on [4Fe-4S] cluster as a cofactor.

The enzyme catalyses GTP + AH2 + S-adenosyl-L-methionine = (8S)-3',8-cyclo-7,8-dihydroguanosine 5'-triphosphate + 5'-deoxyadenosine + L-methionine + A + H(+). It functions in the pathway cofactor biosynthesis; molybdopterin biosynthesis. In terms of biological role, catalyzes the cyclization of GTP to (8S)-3',8-cyclo-7,8-dihydroguanosine 5'-triphosphate. In Hydrogenovibrio crunogenus (strain DSM 25203 / XCL-2) (Thiomicrospira crunogena), this protein is GTP 3',8-cyclase.